The primary structure comprises 273 residues: MSLQKKISQELHVQPSIDPKQEIEKRVGFLKDYLKKTGAKGFVLGISGGQDSTLAGRLAQLAASELRQEGKEDAVFIAVRLPHGVQQDEGDAQLALSFIQPDKSWKYDIAPAVTAFSEQYQKDTGGPLSDFNKGNVKARMRMIAQYAVGGEEGLLVIGTDHAAEAVTGFFTKYGDGGADVLPLTGLTKRQGRTLLEALQAPERLYLKKPTADLLDDKPQQTDETELGITYNEIDDYLEGKPVSEQAVEAIEKRYVQSEHKRQVPASMFDDWWK.

45 to 52 lines the ATP pocket; that stretch reads GISGGQDS. Asp51 lines the Mg(2+) pocket. Arg139 contributes to the deamido-NAD(+) binding site. Thr159 contributes to the ATP binding site. Glu164 lines the Mg(2+) pocket. The deamido-NAD(+) site is built by Lys172 and Asp179. ATP-binding residues include Lys188 and Thr210. 259 to 260 lines the deamido-NAD(+) pocket; sequence HK.

The protein belongs to the NAD synthetase family. As to quaternary structure, homodimer.

The catalysed reaction is deamido-NAD(+) + NH4(+) + ATP = AMP + diphosphate + NAD(+) + H(+). It participates in cofactor biosynthesis; NAD(+) biosynthesis; NAD(+) from deamido-NAD(+) (ammonia route): step 1/1. Catalyzes the ATP-dependent amidation of deamido-NAD to form NAD. Uses ammonia as a nitrogen source. The sequence is that of NH(3)-dependent NAD(+) synthetase from Bacillus pumilus (strain SAFR-032).